The primary structure comprises 318 residues: uncharacterized protein (318 aa).

The protein belongs to the glycosyltransferase 2 family.

This is an uncharacterized protein from Rickettsia prowazekii (strain Madrid E).